Consider the following 929-residue polypeptide: LPS-assembly protein LptD (929 aa).

A signal peptide spans 1 to 33; that stretch reads MAVKSLVFRRKFPLLVTGSLLALQPVAALTVQA. Residues 58–101 form a disordered region; the sequence is NLPPRPAHTATSVSTAAAGSSVSGSGGETVEAEPTQRLVTESGG. Positions 66 to 90 are enriched in low complexity; sequence TATSVSTAAAGSSVSGSGGETVEAE.

Belongs to the LptD family. As to quaternary structure, component of the lipopolysaccharide transport and assembly complex. Interacts with LptE and LptA.

The protein resides in the cell outer membrane. Its function is as follows. Together with LptE, is involved in the assembly of lipopolysaccharide (LPS) at the surface of the outer membrane. This is LPS-assembly protein LptD from Pseudomonas aeruginosa (strain LESB58).